A 523-amino-acid polypeptide reads, in one-letter code: NAD(P)H-quinone oxidoreductase subunit 2 (523 aa).

14 helical membrane passes run 29–49 (AIAPEGAVLVAMLATLLVDLA), 57–77 (WVPPICYAGLGTALVLLAQQW), 94–114 (LAISFRAVVALSTLLSLLISW), 123–143 (PIGEYAAILLAATLGAMLLCG), 147–167 (LVSVFVSLETLSVASYLLAGY), 182–202 (LLVGSAAAAVFLYGASLLYGL), 223–243 (AALSLVFVLATVAFKIAAVPF), 255–275 (PTPVVAFLSVGSKAAGFALAL), 291–311 (LLFTVLAVLSMTLGNVVALAQ), 317–337 (MLAYSSIGQAGFVMIGLVCGT), 345–365 (VLYMAAYLFMNLGAFACIILF), 389–409 (LGLSLCLLSLGGIPPMLGFFG), 424–444 (LLVVVGLVTSVVSIYYYISVI), and 477–497 (IALVGCVVVTAVGGILSNPLF).

Belongs to the complex I subunit 2 family. In terms of assembly, NDH-1 can be composed of about 15 different subunits; different subcomplexes with different compositions have been identified which probably have different functions.

It is found in the cellular thylakoid membrane. It carries out the reaction a plastoquinone + NADH + (n+1) H(+)(in) = a plastoquinol + NAD(+) + n H(+)(out). The catalysed reaction is a plastoquinone + NADPH + (n+1) H(+)(in) = a plastoquinol + NADP(+) + n H(+)(out). Functionally, NDH-1 shuttles electrons from an unknown electron donor, via FMN and iron-sulfur (Fe-S) centers, to quinones in the respiratory and/or the photosynthetic chain. The immediate electron acceptor for the enzyme in this species is believed to be plastoquinone. Couples the redox reaction to proton translocation, and thus conserves the redox energy in a proton gradient. Cyanobacterial NDH-1 also plays a role in inorganic carbon-concentration. The polypeptide is NAD(P)H-quinone oxidoreductase subunit 2 (Prochlorococcus marinus (strain MIT 9313)).